Here is a 209-residue protein sequence, read N- to C-terminus: V-type ATP synthase subunit D (209 aa).

The protein belongs to the V-ATPase D subunit family.

Its function is as follows. Produces ATP from ADP in the presence of a proton gradient across the membrane. The sequence is that of V-type ATP synthase subunit D from Anaeromyxobacter sp. (strain K).